Reading from the N-terminus, the 359-residue chain is DNA replication and repair protein RecF (359 aa).

Position 30 to 37 (30 to 37 (GQNAQGKT)) interacts with ATP.

The protein belongs to the RecF family.

Its subcellular location is the cytoplasm. The RecF protein is involved in DNA metabolism; it is required for DNA replication and normal SOS inducibility. RecF binds preferentially to single-stranded, linear DNA. It also seems to bind ATP. The protein is DNA replication and repair protein RecF of Lactococcus lactis subsp. cremoris (strain SK11).